A 473-amino-acid polypeptide reads, in one-letter code: UDP-N-acetylmuramate--L-alanine ligase (473 aa).

112–118 (GTHGKTT) lines the ATP pocket.

It belongs to the MurCDEF family.

It is found in the cytoplasm. It carries out the reaction UDP-N-acetyl-alpha-D-muramate + L-alanine + ATP = UDP-N-acetyl-alpha-D-muramoyl-L-alanine + ADP + phosphate + H(+). The protein operates within cell wall biogenesis; peptidoglycan biosynthesis. In terms of biological role, cell wall formation. In Nitrosomonas europaea (strain ATCC 19718 / CIP 103999 / KCTC 2705 / NBRC 14298), this protein is UDP-N-acetylmuramate--L-alanine ligase.